Consider the following 268-residue polypeptide: DNA ligase (268 aa).

K41 (N6-AMP-lysine intermediate) is an active-site residue. Positions 111, 181, and 187 each coordinate ATP.

This sequence belongs to the ATP-dependent DNA ligase family. Requires a divalent metal cation as cofactor.

It carries out the reaction ATP + (deoxyribonucleotide)n-3'-hydroxyl + 5'-phospho-(deoxyribonucleotide)m = (deoxyribonucleotide)n+m + AMP + diphosphate.. Catalyzes efficient strand joining on a single nicked DNA. This Haemophilus influenzae (strain ATCC 51907 / DSM 11121 / KW20 / Rd) protein is DNA ligase (ligA).